Here is a 1873-residue protein sequence, read N- to C-terminus: Girdin (1873 aa).

The Calponin-homology (CH) domain occupies 12 to 132 (QFMTSPLVTW…KLLLLLLGCA (121 aa)). Residues 196 to 425 (HLRRLIDERD…EMAQKQSMDE (230 aa)) adopt a coiled-coil conformation. 3 positions are modified to phosphoserine: serine 233, serine 237, and serine 449. Coiled-coil stretches lie at residues 458 to 1232 (TSSK…ESKN) and 1268 to 1385 (HKNL…KFYD). 2 disordered regions span residues 816 to 841 (ENKS…NKRL) and 1013 to 1034 (EERM…GRES). Residue serine 1020 is modified to Phosphoserine. At serine 1387 the chain carries Phosphoserine. The interval 1390 to 1408 (RRRGNWITLKMRKLIKSKK) is phosphoinositide-binding. Residues 1407 to 1416 (KKDINRERQK) are compositionally biased toward basic and acidic residues. 3 disordered regions span residues 1407-1459 (KKDI…LGTK), 1560-1602 (TTSF…SNNN), and 1616-1643 (QSRP…GSSP). The residue at position 1417 (serine 1417) is a Phosphoserine; by PKB/AKT1. 4 stretches are compositionally biased toward polar residues: residues 1417–1430 (SLTL…SSEG), 1445–1459 (VGSN…LGTK), 1560–1579 (TTSF…STGS), and 1616–1626 (QSRPQSHSSGD). At threonine 1421 the chain carries Phosphothreonine. Residues 1674–1704 (KAGSPGSEVVTLQQFLEESNKLTSIQLKSSS) carry the GBA motif. Serine 1677, serine 1692, and serine 1719 each carry phosphoserine. The SH2-like; required for interaction with growth factor receptors stretch occupies residues 1715–1825 (SLSVSSDFLG…GTTRRTSIHD (111 aa)). Positions 1738–1873 (SGKTPGDFYD…KSRSREQQSS (136 aa)) are disordered. The span at 1745–1755 (FYDRRTTKPEF) shows a compositional bias: basic and acidic residues. The residue at position 1767 (tyrosine 1767) is a Phosphotyrosine. Composition is skewed to polar residues over residues 1768-1781 (TISS…STQG), 1789-1801 (TSVS…SNPY), and 1809-1820 (SVISTAEGTTRR). The residue at position 1801 (tyrosine 1801) is a Phosphotyrosine. Serine 1822 and serine 1839 each carry phosphoserine. The segment covering 1822 to 1832 (SIHDFLSKDSR) has biased composition (basic and acidic residues). Low complexity predominate over residues 1839–1852 (SSPPTAGSSSTTAS). The segment covering 1858-1873 (QESRNSKSRSREQQSS) has biased composition (basic and acidic residues).

It belongs to the CCDC88 family. As to quaternary structure, homodimer. Interacts (via GBA motif) with guanine nucleotide-binding protein G(i) alpha subunits GNAI1, GNAI2 and GNAI3. Also interacts (via GNA motif) with guanine nucleotide-binding protein G(s) alpha subunit GNAS. Interaction with G(i) alpha subunits occurs before interaction with GNAS and is regulated by phosphorylation; phosphorylation at Ser-1677 enhances binding to G(i) alpha subunits while phosphorylation at Ser-1692 abolishes G(i) alpha subunit binding, promoting binding to GNAS. Interacts (via C-terminal SH2-like region) with growth factor receptors EGFR, INSR and KDR/VEGFR2 (via their autophosphorylated cytoplasmic tails). Forms a complex with EGFR and GNAI3 which leads to enhanced EGFR signaling and triggering of cell migration; ligand stimulation is required for recruitment of GNAI3 to the complex. Interacts (tyrosine-phosphorylated form) with phosphatidylinositol 3-kinase (PI3K) regulatory subunit PIK3R1/p85a (via SH2 domains); the interaction enables recruitment of PIK3R1 to the EGFR receptor, enhancing PI3K activity and cell migration. Interacts with serine/threonine-protein kinase PRKCQ; the interaction leads to phosphorylation of CCDC88A and inhibition of its guanine nucleotide exchange factor activity. Interacts (via C-terminus) with DISC1; the interaction is direct. Interacts with AKT proteins; the interaction is inhibited in the presence of DISC1. Interacts with AKT1/PKB (via C-terminus). The non-phosphorylated form interacts with phosphatidylinositol 4-phosphate [Pi(4)P] and weakly with phosphatidylinositol 3-phosphate [Pi(3)P]. Interacts with microtubules. Interacts with actin. Post-translationally, phosphorylation is induced by epidermal growth factor (EGF) in a phosphoinositide 3-kinase (PI3K)-dependent manner. Phosphorylation by AKT1/PKB is necessary for the delocalization from the cell membrane and for cell migration. Phosphorylated on tyrosine residues which promotes binding to phosphatidylinositol 3-kinase (PI3K) regulatory subunit PIK3R1/p85a and enhances PI3K activity. Tyrosine-phosphorylated by both receptor and non-receptor tyrosine kinases in vitro. Tyrosine phosphorylation is required for AKT1-dependent phosphorylation of Ser-1417. Phosphorylation at Ser-1692 by PRKCQ disrupts interaction with GNAI3 and inhibits guanine nucleotide exchange factor activity. As to expression, expressed in the dentate gyrus, pyramidal cell layer of hippocampal regions CA1 and CA3 at postnatal 15. Expressed highly in neurons. Weakly in neuron progenitors (at protein level). Expressed in the dentate granule cell layer of the hippocampus. Expressed highly in the adult testis, moderately in the brain and at a low level in the spleen, lungs and fat.

Its subcellular location is the cell membrane. It localises to the cytoplasm. The protein resides in the cytosol. It is found in the cytoplasmic vesicle. The protein localises to the cell projection. Its subcellular location is the lamellipodium. It localises to the cytoskeleton. The protein resides in the cilium basal body. It is found in the microtubule organizing center. The protein localises to the centrosome. Its subcellular location is the centriole. Bifunctional modulator of guanine nucleotide-binding proteins (G proteins). Acts as a non-receptor guanine nucleotide exchange factor which binds to and activates guanine nucleotide-binding protein G(i) alpha subunits. Also acts as a guanine nucleotide dissociation inhibitor for guanine nucleotide-binding protein G(s) subunit alpha GNAS. Essential for cell migration. Interacts in complex with G(i) alpha subunits with the EGFR receptor, retaining EGFR at the cell membrane following ligand stimulation and promoting EGFR signaling which triggers cell migration. Binding to Gi-alpha subunits displaces the beta and gamma subunits from the heterotrimeric G-protein complex which enhances phosphoinositide 3-kinase (PI3K)-dependent phosphorylation and kinase activity of AKT1/PKB. Phosphorylation of AKT1/PKB induces the phosphorylation of downstream effectors GSK3 and FOXO1/FKHR, and regulates DNA replication and cell proliferation. Binds in its tyrosine-phosphorylated form to the phosphatidylinositol 3-kinase (PI3K) regulatory subunit PIK3R1 which enables recruitment of PIK3R1 to the EGFR receptor, enhancing PI3K activity and cell migration. Plays a role as a key modulator of the AKT-mTOR signaling pathway, controlling the tempo of the process of newborn neuron integration during adult neurogenesis, including correct neuron positioning, dendritic development and synapse formation. Inhibition of G(s) subunit alpha GNAS leads to reduced cellular levels of cAMP and suppression of cell proliferation. Essential for the integrity of the actin cytoskeleton. Required for formation of actin stress fibers and lamellipodia. May be involved in membrane sorting in the early endosome. Plays a role in ciliogenesis and cilium morphology and positioning and this may partly be through regulation of the localization of scaffolding protein CROCC/Rootletin. The protein is Girdin (Ccdc88a) of Mus musculus (Mouse).